Consider the following 403-residue polypeptide: Tryptophan synthase beta chain 1 (403 aa).

Residue Lys-93 is modified to N6-(pyridoxal phosphate)lysine.

Belongs to the TrpB family. As to quaternary structure, tetramer of two alpha and two beta chains. Requires pyridoxal 5'-phosphate as cofactor.

It catalyses the reaction (1S,2R)-1-C-(indol-3-yl)glycerol 3-phosphate + L-serine = D-glyceraldehyde 3-phosphate + L-tryptophan + H2O. It functions in the pathway amino-acid biosynthesis; L-tryptophan biosynthesis; L-tryptophan from chorismate: step 5/5. The beta subunit is responsible for the synthesis of L-tryptophan from indole and L-serine. In Methanosarcina acetivorans (strain ATCC 35395 / DSM 2834 / JCM 12185 / C2A), this protein is Tryptophan synthase beta chain 1 (trpB1).